Here is a 275-residue protein sequence, read N- to C-terminus: Ditrans,polycis-undecaprenyl-diphosphate synthase ((2E,6E)-farnesyl-diphosphate specific) (275 aa).

The active site involves Asp45. Asp45 contacts Mg(2+). Substrate-binding positions include 46-49 (GNGR), Trp50, Arg58, His62, and 90-92 (SSE). The active-site Proton acceptor is Asn93. Substrate contacts are provided by residues Trp94, Arg96, Arg213, and 219–221 (RIS). Glu232 contacts Mg(2+).

It belongs to the UPP synthase family. As to quaternary structure, homodimer. It depends on Mg(2+) as a cofactor.

The catalysed reaction is 8 isopentenyl diphosphate + (2E,6E)-farnesyl diphosphate = di-trans,octa-cis-undecaprenyl diphosphate + 8 diphosphate. Catalyzes the sequential condensation of isopentenyl diphosphate (IPP) with (2E,6E)-farnesyl diphosphate (E,E-FPP) to yield (2Z,6Z,10Z,14Z,18Z,22Z,26Z,30Z,34E,38E)-undecaprenyl diphosphate (di-trans,octa-cis-UPP). UPP is the precursor of glycosyl carrier lipid in the biosynthesis of bacterial cell wall polysaccharide components such as peptidoglycan and lipopolysaccharide. The protein is Ditrans,polycis-undecaprenyl-diphosphate synthase ((2E,6E)-farnesyl-diphosphate specific) of Shewanella oneidensis (strain ATCC 700550 / JCM 31522 / CIP 106686 / LMG 19005 / NCIMB 14063 / MR-1).